The following is a 117-amino-acid chain: Conotoxin vil14.2 (117 aa).

Residues 1–22 (MGFRVLVLVVMATTFALPFTFF) form the signal peptide. Positions 23–90 (EEPGRSPFRP…FAELSVGQRR (68 aa)) are excised as a propeptide. Residues 53-77 (RADGQPPDMRQPEMRRPEMRRPEVR) form a disordered region. Residues 62-77 (RQPEMRRPEMRRPEVR) show a composition bias toward basic and acidic residues. 2 cysteine pairs are disulfide-bonded: Cys-96-Cys-116 and Cys-100-Cys-112.

It belongs to the conotoxin R superfamily. In terms of tissue distribution, expressed by the venom duct.

Its subcellular location is the secreted. The chain is Conotoxin vil14.2 from Conus villepinii (Villepin's cone).